Reading from the N-terminus, the 263-residue chain is Urease accessory protein UreD 1 (263 aa).

Belongs to the UreD family. UreD, UreF and UreG form a complex that acts as a GTP-hydrolysis-dependent molecular chaperone, activating the urease apoprotein by helping to assemble the nickel containing metallocenter of UreC. The UreE protein probably delivers the nickel.

It is found in the cytoplasm. Functionally, required for maturation of urease via the functional incorporation of the urease nickel metallocenter. In Synechococcus sp. (strain JA-3-3Ab) (Cyanobacteria bacterium Yellowstone A-Prime), this protein is Urease accessory protein UreD 1.